Consider the following 440-residue polypeptide: NADH-quinone oxidoreductase subunit D 2 (440 aa).

Belongs to the complex I 49 kDa subunit family. In terms of assembly, NDH-1 is composed of 14 different subunits. Subunits NuoB, C, D, E, F, and G constitute the peripheral sector of the complex.

The protein localises to the cell membrane. It carries out the reaction a quinone + NADH + 5 H(+)(in) = a quinol + NAD(+) + 4 H(+)(out). Its function is as follows. NDH-1 shuttles electrons from NADH, via FMN and iron-sulfur (Fe-S) centers, to quinones in the respiratory chain. The immediate electron acceptor for the enzyme in this species is believed to be a menaquinone. Couples the redox reaction to proton translocation (for every two electrons transferred, four hydrogen ions are translocated across the cytoplasmic membrane), and thus conserves the redox energy in a proton gradient. The chain is NADH-quinone oxidoreductase subunit D 2 from Streptomyces coelicolor (strain ATCC BAA-471 / A3(2) / M145).